Here is a 165-residue protein sequence, read N- to C-terminus: MPLNREDKQAVVAEVSAQVAKAQTVVLAEYRGIAVGDLTKLRAKAREQQVYLRVLKNTLARRAVEGTPFAPLAEQMTGPLIYGISEDAIAAAKVVNDFSKSNEKLVIKAGSFDGKVMDKAGVQALASIPSREELLSKLLFVMQSPVSGFARALAALAEKKQAEAA.

Belongs to the universal ribosomal protein uL10 family. In terms of assembly, part of the ribosomal stalk of the 50S ribosomal subunit. The N-terminus interacts with L11 and the large rRNA to form the base of the stalk. The C-terminus forms an elongated spine to which L12 dimers bind in a sequential fashion forming a multimeric L10(L12)X complex.

Functionally, forms part of the ribosomal stalk, playing a central role in the interaction of the ribosome with GTP-bound translation factors. This chain is Large ribosomal subunit protein uL10, found in Burkholderia cenocepacia (strain HI2424).